Consider the following 197-residue polypeptide: ATP-dependent Clp protease proteolytic subunit (197 aa).

Ser-101 (nucleophile) is an active-site residue. His-126 is a catalytic residue.

Belongs to the peptidase S14 family. Component of the chloroplastic Clp protease core complex.

It localises to the plastid. It is found in the chloroplast stroma. The enzyme catalyses Hydrolysis of proteins to small peptides in the presence of ATP and magnesium. alpha-casein is the usual test substrate. In the absence of ATP, only oligopeptides shorter than five residues are hydrolyzed (such as succinyl-Leu-Tyr-|-NHMec, and Leu-Tyr-Leu-|-Tyr-Trp, in which cleavage of the -Tyr-|-Leu- and -Tyr-|-Trp bonds also occurs).. Functionally, cleaves peptides in various proteins in a process that requires ATP hydrolysis. Has a chymotrypsin-like activity. Plays a major role in the degradation of misfolded proteins. The sequence is that of ATP-dependent Clp protease proteolytic subunit from Daucus carota (Wild carrot).